The sequence spans 83 residues: Small ribosomal subunit protein uS19m (83 aa).

The protein belongs to the universal ribosomal protein uS19 family.

It is found in the mitochondrion. The sequence is that of Small ribosomal subunit protein uS19m (RPS19) from Tetraselmis subcordiformis (Marine green alga).